The chain runs to 111 residues: Nucleoid-associated protein Tmel_0542 (111 aa).

This sequence belongs to the YbaB/EbfC family. In terms of assembly, homodimer.

The protein resides in the cytoplasm. It is found in the nucleoid. Its function is as follows. Binds to DNA and alters its conformation. May be involved in regulation of gene expression, nucleoid organization and DNA protection. This is Nucleoid-associated protein Tmel_0542 from Thermosipho melanesiensis (strain DSM 12029 / CIP 104789 / BI429).